Reading from the N-terminus, the 360-residue chain is Phospho-N-acetylmuramoyl-pentapeptide-transferase (360 aa).

10 consecutive transmembrane segments (helical) span residues 25–45 (RAIL…PTLI), 73–93 (TMGG…WADL), 97–117 (YVWV…VDDY), 128–148 (LIAK…AVYL), 168–188 (VMPQ…VGTS), 199–219 (GLAI…AYVS), 236–256 (TAEL…FLWF), 262–282 (LVFM…IIAI), 288–308 (LVLF…MLQV), and 338–358 (VIVR…ATLK).

It belongs to the glycosyltransferase 4 family. MraY subfamily. Mg(2+) serves as cofactor.

The protein localises to the cell inner membrane. The enzyme catalyses UDP-N-acetyl-alpha-D-muramoyl-L-alanyl-gamma-D-glutamyl-meso-2,6-diaminopimeloyl-D-alanyl-D-alanine + di-trans,octa-cis-undecaprenyl phosphate = di-trans,octa-cis-undecaprenyl diphospho-N-acetyl-alpha-D-muramoyl-L-alanyl-D-glutamyl-meso-2,6-diaminopimeloyl-D-alanyl-D-alanine + UMP. Its pathway is cell wall biogenesis; peptidoglycan biosynthesis. In terms of biological role, catalyzes the initial step of the lipid cycle reactions in the biosynthesis of the cell wall peptidoglycan: transfers peptidoglycan precursor phospho-MurNAc-pentapeptide from UDP-MurNAc-pentapeptide onto the lipid carrier undecaprenyl phosphate, yielding undecaprenyl-pyrophosphoryl-MurNAc-pentapeptide, known as lipid I. The chain is Phospho-N-acetylmuramoyl-pentapeptide-transferase from Idiomarina loihiensis (strain ATCC BAA-735 / DSM 15497 / L2-TR).